We begin with the raw amino-acid sequence, 332 residues long: 5-dehydro-2-deoxygluconokinase (332 aa).

The protein belongs to the carbohydrate kinase PfkB family.

It carries out the reaction 5-dehydro-2-deoxy-D-gluconate + ATP = 6-phospho-5-dehydro-2-deoxy-D-gluconate + ADP + H(+). It functions in the pathway polyol metabolism; myo-inositol degradation into acetyl-CoA; acetyl-CoA from myo-inositol: step 5/7. Functionally, catalyzes the phosphorylation of 5-dehydro-2-deoxy-D-gluconate (2-deoxy-5-keto-D-gluconate or DKG) to 6-phospho-5-dehydro-2-deoxy-D-gluconate (DKGP). The sequence is that of 5-dehydro-2-deoxygluconokinase from Bacillus thuringiensis (strain Al Hakam).